We begin with the raw amino-acid sequence, 340 residues long: RNA 3'-terminal phosphate cyclase (340 aa).

Residues Gln-102 and 284-288 (FLGDQ) each bind ATP. Residue His-308 is the Tele-AMP-histidine intermediate of the active site.

It belongs to the RNA 3'-terminal cyclase family. Type 1 subfamily.

It localises to the cytoplasm. The enzyme catalyses a 3'-end 3'-phospho-ribonucleotide-RNA + ATP = a 3'-end 2',3'-cyclophospho-ribonucleotide-RNA + AMP + diphosphate. Catalyzes the conversion of 3'-phosphate to a 2',3'-cyclic phosphodiester at the end of RNA. The mechanism of action of the enzyme occurs in 3 steps: (A) adenylation of the enzyme by ATP; (B) transfer of adenylate to an RNA-N3'P to produce RNA-N3'PP5'A; (C) and attack of the adjacent 2'-hydroxyl on the 3'-phosphorus in the diester linkage to produce the cyclic end product. The biological role of this enzyme is unknown but it is likely to function in some aspects of cellular RNA processing. In Thermococcus onnurineus (strain NA1), this protein is RNA 3'-terminal phosphate cyclase.